Reading from the N-terminus, the 390-residue chain is GTPase Obg/CgtA (390 aa).

The Obg domain occupies 1-159; the sequence is MKFVDEAVIK…RDIRLELLLL (159 aa). An OBG-type G domain is found at 160–333; it reads ADVGMLGMPN…LCMKLAEFMD (174 aa). Residues 166-173, 191-195, 213-216, 283-286, and 314-316 each bind GTP; these read GMPNAGKS, FTTLV, DIPG, NKVD, and SAA. Mg(2+)-binding residues include Ser173 and Thr193.

Belongs to the TRAFAC class OBG-HflX-like GTPase superfamily. OBG GTPase family. Monomer. Interacts with SpoT (AC Q9KNM2) in a yeast 2-hybrid assay. Requires Mg(2+) as cofactor.

Its subcellular location is the cytoplasm. In terms of biological role, depletion experiments lead to gene down regulation and a dramatic increase in ppGpp levels, like those seen in the stringent response. There is no change in cell morphology in depletion experiments, but cells are very sensitive to the DNA-damaging agent hydroxyurea and are very elongated. Overexpression reduces growth and leads to elongated cells. Overexpression of proteins with C-terminal deletions of 29 or 62 amino acids showed fewer elongated cells. Its function is as follows. An essential GTPase which binds GTP, GDP and possibly (p)ppGpp with moderate affinity, with high nucleotide exchange rates and a fairly low GTP hydrolysis rate. It may play a role in control of the cell cycle, stress response, ribosome biogenesis and in those bacteria that undergo differentiation, in morphogenesis control. GTPase activity is stimulated by 50S ribosomal subunits. In Vibrio cholerae serotype O1 (strain ATCC 39315 / El Tor Inaba N16961), this protein is GTPase Obg/CgtA.